Consider the following 347-residue polypeptide: Protein RecA (347 aa).

ATP is bound at residue 68 to 75 (GPESSGKT).

The protein belongs to the RecA family.

It localises to the cytoplasm. Can catalyze the hydrolysis of ATP in the presence of single-stranded DNA, the ATP-dependent uptake of single-stranded DNA by duplex DNA, and the ATP-dependent hybridization of homologous single-stranded DNAs. It interacts with LexA causing its activation and leading to its autocatalytic cleavage. In Nocardia farcinica (strain IFM 10152), this protein is Protein RecA.